The primary structure comprises 296 residues: MADSFSLNDALSGSGNPNPQGWPGPWGNQPAGAGGYPGASYPGAYPGQAPPGGYPGQAPPGGYPGQAPPGGYPGQAPPGGYPGQAPPGGYPGQAPPGGYPGQAPPGTYPGPTAPAYPGPTAPGTQPGQPSGPGAYPPPGQPSAPGAYPAAGPFGIPAGPLTVPYDLPLPGGVKPRMLITILGTVRPSANRLALDFKRGNDVAFHFNPRFNEDNKRVIVCNTKLDNIWGKEERQAAFPFESGKPFKIQVLVESDHFKVAVNDAHLLQYNHRMKNLPEISKLGISGDIDLTSASYAMI.

Residues 1–11 (MADSFSLNDAL) are compositionally biased toward polar residues. The disordered stretch occupies residues 1 to 150 (MADSFSLNDA…PSAPGAYPAA (150 aa)). The residue at position 2 (alanine 2) is an N-acetylalanine. Phosphoserine; by CK1 is present on residues serine 6 and serine 12. 2 stretches are compositionally biased toward low complexity: residues 12 to 31 (SGSG…NQPA) and 38 to 47 (GASYPGAYPG). A run of 8 repeats spans residues 36–44 (YPGASYPGA), 45–53 (YPGQAPPGG), 54–62 (YPGQAPPGG), 63–71 (YPGQAPPGG), 72–80 (YPGQAPPGG), 81–89 (YPGQAPPGG), 90–98 (YPGQAPPGG), and 99–107 (YPGQAPPGT). Residues 36–143 (YPGASYPGAY…AYPPPGQPSA (108 aa)) are 12 X 9 AA tandem repeats of Y-P-G-X(3)-P-G-[GAT]. Over residues 48-120 (QAPPGGYPGQ…PTAPAYPGPT (73 aa)) the composition is skewed to pro residues. One copy of the 9; approximate repeat lies at 108 to 115 (YPGPTAPA). Copy 10 of the repeat occupies 116–124 (YPGPTAPGT). A compositionally biased stretch (low complexity) spans 121–133 (APGTQPGQPSGPG). An 11; approximate repeat occupies 125 to 134 (QPGQPSGPGA). Residues 135–143 (YPPPGQPSA) form a 12; approximate repeat. The 131-residue stretch at 164 to 294 (YDLPLPGGVK…DIDLTSASYA (131 aa)) folds into the Galectin domain. Residue 227–233 (WGKEERQ) coordinates a beta-D-galactoside. A Nuclear export signal motif is present at residues 272–287 (KNLPEISKLGISGDID).

As to quaternary structure, probably forms homo- or heterodimers. Interacts with DMBT1. Interacts with CD6 and ALCAM. Forms a complex with the ITGA3, ITGB1 and CSPG4. Interacts with LGALS3BP, LYPD3, ZFTRAF1 and UACA. Interacts with TRIM16; this interaction mediates autophagy of damage endomembranes. Interacts with cargo receptor TMED10; the interaction mediates the translocation from the cytoplasm into the ERGIC (endoplasmic reticulum-Golgi intermediate compartment) and thereby secretion. Interacts with and inhibits by binding NCR3/NKp30. In terms of processing, the degree of phosphorylation is higher in the cytoplasmic form than in the nuclear form. In protein isolated from a canine kidney cell line, 90% of the phosphate was on Ser-6 and 10% was on Ser-12.

Its subcellular location is the cytoplasm. The protein resides in the nucleus. It is found in the secreted. In terms of biological role, galactose-specific lectin which binds IgE. May mediate with the alpha-3, beta-1 integrin the stimulation by CSPG4 of endothelial cells migration. Together with DMBT1, required for terminal differentiation of columnar epithelial cells during early embryogenesis. In the nucleus: acts as a pre-mRNA splicing factor. Involved in acute inflammatory responses including neutrophil activation and adhesion, chemoattraction of monocytes macrophages, opsonization of apoptotic neutrophils, and activation of mast cells. Together with TRIM16, coordinates the recognition of membrane damage with mobilization of the core autophagy regulators ATG16L1 and BECN1 in response to damaged endomembranes. When secreted, interacts with NK cell-activating receptor NCR3/NKp30 acting as an inhibitory ligand which antagonizes NK cell attack. This is Galectin-3 (LGALS3) from Canis lupus familiaris (Dog).